The sequence spans 558 residues: Aurovertin biosynthesis cluster transcription factor aurF (558 aa).

This sequence belongs to the POU transcription factor family. Class-3 subfamily.

The protein localises to the nucleus. Functionally, transcription factor that regulates the expression of the gene cluster that mediates the biosynthesis of aurovertins, fungal polyketides that exhibit potent inhibition of adenosine triphosphate synthase. This chain is Aurovertin biosynthesis cluster transcription factor aurF, found in Calcarisporium arbuscula (Dendryphion arbuscula).